The chain runs to 440 residues: MDKLAVLYAEHIATLQQRTRTICEREGLEGLVIHSGQAKRQFLDDMYYPFKVNPHFKAWLPVLDNPHCWIVVNGSDKPKLIFYRPVDFWHKVPDEPRDFWAEYFDIELLLQPDQVEKLLPYDKANYAYVGEYLEVAQALGFSVMNPEPVLNYFHYHRAYKTQYELECLRNANRIAVDGHKAARDTFFNGGSEFDIQQAYLMATRQSENEMPYGNIVALNENCAILHYTHFEAKAPQQHNSFLIDAGANFNGYAADITRTYDFKKQGEFAELVQAMTAAQIELGTGLKPGMLYGDLHVECHNRVAQILSDFDIVKLPAEEIVERKITSTFFPHGLGHHLGLQVHDMGGFMADEMGAQQAAPEGHPFLRCTRIIEKNQVFTIEPGLYFIDSLLGDLAQTDNKQFINWQKVESFKPYGGIRIEDNIIVHEDSLENMTRNLALD.

The Mn(2+) site is built by Asp-244, Asp-255, His-336, Glu-381, and Glu-420.

This sequence belongs to the peptidase M24B family. Bacterial-type prolidase subfamily. It depends on Mn(2+) as a cofactor.

The catalysed reaction is Xaa-L-Pro dipeptide + H2O = an L-alpha-amino acid + L-proline. Its function is as follows. Splits dipeptides with a prolyl residue in the C-terminal position. The sequence is that of Xaa-Pro dipeptidase from Pseudoalteromonas translucida (strain TAC 125).